The sequence spans 540 residues: Alanine aminotransferase 2, mitochondrial (540 aa).

The transit peptide at 1–46 (MRRFLINQAKGLVDHSRRQHHHKSPSFLSPQPRPLASSPPALSRFF) directs the protein to the mitochondrion. The disordered stretch occupies residues 11–40 (GLVDHSRRQHHHKSPSFLSPQPRPLASSPP). Over residues 28 to 40 (LSPQPRPLASSPP) the composition is skewed to low complexity. Lysine 357 is modified (N6-(pyridoxal phosphate)lysine).

It belongs to the class-I pyridoxal-phosphate-dependent aminotransferase family. Alanine aminotransferase subfamily. As to quaternary structure, homodimer. Pyridoxal 5'-phosphate is required as a cofactor. In terms of processing, the N-terminus is blocked. Expressed in shoots, essentially in leaves and flowers, mostly in vascular tissues. Also detected in stems and roots.

Its subcellular location is the mitochondrion. The catalysed reaction is L-alanine + 2-oxoglutarate = pyruvate + L-glutamate. It participates in photosynthesis; C4 acid pathway. Its pathway is amino-acid degradation; L-alanine degradation via transaminase pathway; pyruvate from L-alanine: step 1/1. This chain is Alanine aminotransferase 2, mitochondrial (ALAAT2), found in Arabidopsis thaliana (Mouse-ear cress).